We begin with the raw amino-acid sequence, 912 residues long: Nitrate reductase [NADH] (912 aa).

The tract at residues 1-99 is disordered; sequence SVEPRQPFGR…PRDEGTADAW (99 aa). The span at 13–23 shows a compositional bias: low complexity; it reads APATAPTARAP. Residues 54–68 show a composition bias toward acidic residues; the sequence is AEEDEEDDDEDDEGH. A compositionally biased stretch (basic and acidic residues) spans 85–94; it reads PSTRDPRDEG. Cys186 is a binding site for Mo-molybdopterin. One can recognise a Cytochrome b5 heme-binding domain in the interval 535–610; the sequence is DKQFTMSEVR…LDTYRIGELI (76 aa). Residues His570 and His593 each coordinate heme. The region spanning 651 to 764 is the FAD-binding FR-type domain; the sequence is REKVPCRLVD…KGPLGHVEYT (114 aa). FAD-binding positions include 703–706, 720–724, Phe725, Phe732, 737–739, Ser788, and Thr791; these read RAYT, LVKVY, and LMT.

It belongs to the nitrate reductase family. As to quaternary structure, homodimer. Requires FAD as cofactor. Heme is required as a cofactor. Mo-molybdopterin serves as cofactor.

It carries out the reaction nitrite + NAD(+) + H2O = nitrate + NADH + H(+). In terms of biological role, nitrate reductase is a key enzyme involved in the first step of nitrate assimilation in plants, fungi and bacteria. The polypeptide is Nitrate reductase [NADH] (Hordeum vulgare (Barley)).